We begin with the raw amino-acid sequence, 371 residues long: Probable F-box protein At1g65740 (371 aa).

The F-box domain maps to 2 to 49 (VDWSTLPEELLHFIAARSFSLVEYKRFSSICVSWHSSVSGVKKNPFHR).

The protein is Probable F-box protein At1g65740 of Arabidopsis thaliana (Mouse-ear cress).